The primary structure comprises 363 residues: D(1) dopamine receptor (363 aa).

The Extracellular segment spans residues 1 to 24 (MAVLDLNLTTVIDSGFMESDRSVR). N-linked (GlcNAc...) asparagine glycosylation is present at N7. A helical transmembrane segment spans residues 25 to 45 (VLTGCFLSVLILSTLLGNTLV). Residues 46–61 (CAAVTKFRHLRSKVTN) are Cytoplasmic-facing. A helical transmembrane segment spans residues 62-81 (FFVISLAVSDLLVAVLVMPW). Over 82–98 (KAVTEVAGFWPFGAFCD) the chain is Extracellular. C97 and C187 form a disulfide bridge. Residues 99–120 (IWVAFDIMCSTASILNLCVISV) traverse the membrane as a helical segment. Residues 121 to 139 (DRYWAISSPFRYERKMTPR) lie on the Cytoplasmic side of the membrane. A helical membrane pass occupies residues 140-164 (VAFVMISGAWTLSVLISFIPVQLKW). Residues 165-194 (HKAQPIGFLEVNASRRDLPTDNCDSSLNRT) lie on the Extracellular side of the membrane. The helical transmembrane segment at 195–219 (YAISSSLISFYIPVAIMIVTYTQIY) threads the bilayer. The Cytoplasmic segment spans residues 220 to 271 (RIAQKQIRRISALERAAESAQIRHDSMGSGSNMDLESSFKLSFKRETKVLKT). The helical transmembrane segment at 272 to 297 (LSVIMGVFVCCWLPFFILNCMVPFCK) threads the bilayer. The Extracellular portion of the chain corresponds to 298–310 (RTSNGLPCISPTT). Residues 311–330 (FDVFVWFGWANSSLNPIIYA) traverse the membrane as a helical segment. Residues 331–363 (FNADFRRAFAILLGCQRLCPGSISMETPSLNKN) lie on the Cytoplasmic side of the membrane. C345 is lipidated: S-palmitoyl cysteine.

It belongs to the G-protein coupled receptor 1 family. As to expression, retina.

Its subcellular location is the cell membrane. The protein localises to the cell projection. It is found in the cilium membrane. Functionally, dopamine receptor whose activity is mediated by G proteins which activate adenylyl cyclase. Could be involved in growth hormone release. This chain is D(1) dopamine receptor, found in Carassius auratus (Goldfish).